Consider the following 564-residue polypeptide: uncharacterized protein (564 aa).

Positions 1–17 (MRRPSTASLTRTPSRAS) are enriched in polar residues. A disordered region spans residues 1–564 (MRRPSTASLT…ASTPSSEVIS (564 aa)). Composition is skewed to low complexity over residues 79–97 (SPRTPSRASPTRRLPRASP) and 114–134 (SPTGTPSTASPTGTPSSASPT). The segment covering 153 to 168 (RSPSTASLTRTPSRAS) has biased composition (polar residues). The span at 170–179 (TRWPPRASPT) shows a compositional bias: low complexity. Residues 250–271 (GSPPRASPMTPPRASPRTPPRA) show a composition bias toward pro residues. Over residues 272 to 299 (SPTTTPSRASLTRTPSWASPTTTPSRAS) the composition is skewed to low complexity. The span at 318–351 (PTGTPSRASPTGTPSRASLTGSPSRASLTGTPSR) shows a compositional bias: polar residues. The segment covering 378 to 416 (RASLTGTSSTASLTRTPSRASLTRTQSSSSLTRTPSMAS) has biased composition (low complexity). A compositionally biased stretch (polar residues) spans 467 to 564 (SRASLTRTPS…ASTPSSEVIS (98 aa)).

This is an uncharacterized protein from Homo sapiens (Human).